Here is an 83-residue protein sequence, read N- to C-terminus: Putative protein T-ENOL (83 aa).

The interval 1-33 (MASTPMGNEGEKKSSWPSQAAPSLRGGPASLSR) is disordered.

The protein is Putative protein T-ENOL of Homo sapiens (Human).